Reading from the N-terminus, the 228-residue chain is PKHD-type hydroxylase YbiX (228 aa).

The Fe2OG dioxygenase domain occupies 78-177 (TLSTPLFNRY…RVASFIWIQS (100 aa)). Residues histidine 96, aspartate 98, and histidine 158 each contribute to the Fe cation site. A 2-oxoglutarate-binding site is contributed by arginine 168.

It depends on Fe(2+) as a cofactor. Requires L-ascorbate as cofactor.

The polypeptide is PKHD-type hydroxylase YbiX (Escherichia coli O157:H7).